The following is a 450-amino-acid chain: Tubulin alpha-1 chain (450 aa).

The GTP site is built by Gln-11, Glu-71, Gly-144, Thr-145, Thr-179, Asn-206, and Asn-228. A Mg(2+)-binding site is contributed by Glu-71. Glu-254 is an active-site residue.

It belongs to the tubulin family. As to quaternary structure, dimer of alpha and beta chains. A typical microtubule is a hollow water-filled tube with an outer diameter of 25 nm and an inner diameter of 15 nM. Alpha-beta heterodimers associate head-to-tail to form protofilaments running lengthwise along the microtubule wall with the beta-tubulin subunit facing the microtubule plus end conferring a structural polarity. Microtubules usually have 13 protofilaments but different protofilament numbers can be found in some organisms and specialized cells. Requires Mg(2+) as cofactor. Post-translationally, undergoes a tyrosination/detyrosination cycle, the cyclic removal and re-addition of a C-terminal tyrosine residue by the enzymes tubulin tyrosine carboxypeptidase (TTCP) and tubulin tyrosine ligase (TTL), respectively.

Its subcellular location is the cytoplasm. It localises to the cytoskeleton. It catalyses the reaction GTP + H2O = GDP + phosphate + H(+). Tubulin is the major constituent of microtubules, a cylinder consisting of laterally associated linear protofilaments composed of alpha- and beta-tubulin heterodimers. Microtubules grow by the addition of GTP-tubulin dimers to the microtubule end, where a stabilizing cap forms. Below the cap, tubulin dimers are in GDP-bound state, owing to GTPase activity of alpha-tubulin. This chain is Tubulin alpha-1 chain (TUBA1), found in Oryza sativa subsp. japonica (Rice).